We begin with the raw amino-acid sequence, 176 residues long: NADH-dependent flavin reductase (176 aa).

FAD-binding positions include 39–46 (EDSVHGMT) and 48–49 (NA). Ser-52 serves as a coordination point for NAD(+). FAD is bound by residues 63 to 65 (SIS), 69 to 70 (KM), and 95 to 96 (HF). Residues His-137 and 157–160 (FYTG) contribute to the NAD(+) site.

It belongs to the non-flavoprotein flavin reductase family. In terms of assembly, homodimer. 4-nitrophenol 2-monooxygenase complex consists of an oxygenase component NphA1 and a flavin reductase component NphA2.

The catalysed reaction is a reduced flavin + NAD(+) = an oxidized flavin + NADH + 2 H(+). Its function is as follows. Catalyzes the reduction of FAD with the concomitant oxidation of NADH. NAD is the physiological electron donor. Subsequently, the reduced flavins diffuse to the oxygenase component NphA2. The chain is NADH-dependent flavin reductase (nphA2) from Rhodococcus sp.